Here is a 359-residue protein sequence, read N- to C-terminus: Fructose-like permease IIC component 2 (359 aa).

Residues 11-344 (TRQHLMTGVS…KSLARKNGSS (334 aa)) form the PTS EIIC type-2 domain. 9 helical membrane passes run 19 to 39 (VSHMIPFVVSGGILLAVSVML), 60 to 80 (IGVAGLTLMVPFLAAYIGYSI), 99 to 119 (FGAGFFGALIAGIIGGIVVHY), 135 to 155 (IFIIPIVGTLITAGIMMWGLG), 176 to 196 (SIVMLAVIMGLMLAFDMGGPV), 216 to 236 (VAIAAVGICIPPLGMGLATLI), 251 to 271 (AALVMGCVGVTEGAIPFAAAD), 290 to 310 (AALVGAQCYAGWGGLIVLPVV), and 314 to 334 (LGYIAAVAVGAVVTAVCVNVL).

The protein resides in the cell inner membrane. In terms of biological role, the phosphoenolpyruvate-dependent sugar phosphotransferase system (PTS), a major carbohydrate active -transport system, catalyzes the phosphorylation of incoming sugar substrates concomitant with their translocation across the cell membrane. The sequence is that of Fructose-like permease IIC component 2 (frwC) from Escherichia coli (strain K12).